A 200-amino-acid chain; its full sequence is MASKLETLKANLEAAFGGLLLNLSEAIGELTIVVKASDYLNVATRLRDDRSLGFEQCVDLCGVDYQTYAEGAYDGPRFAAVLHLLSVQNNWRLRLRVFAPDDEVPILPSVVEIWNSVNWYEREAFDLYGIVFEGHPDLRRILTDYGFIGHPFRKDFPVSGYVEMRYDPEEKRVVYQPVTIEPREITPRVIREDRYGGLKH.

It belongs to the complex I 30 kDa subunit family. As to quaternary structure, NDH-1 is composed of 14 different subunits. Subunits NuoB, C, D, E, F, and G constitute the peripheral sector of the complex.

The protein localises to the cell inner membrane. The catalysed reaction is a quinone + NADH + 5 H(+)(in) = a quinol + NAD(+) + 4 H(+)(out). NDH-1 shuttles electrons from NADH, via FMN and iron-sulfur (Fe-S) centers, to quinones in the respiratory chain. The immediate electron acceptor for the enzyme in this species is believed to be ubiquinone. Couples the redox reaction to proton translocation (for every two electrons transferred, four hydrogen ions are translocated across the cytoplasmic membrane), and thus conserves the redox energy in a proton gradient. The chain is NADH-quinone oxidoreductase subunit C from Paraburkholderia phytofirmans (strain DSM 17436 / LMG 22146 / PsJN) (Burkholderia phytofirmans).